The sequence spans 461 residues: ADP-specific phosphofructokinase (461 aa).

An ADPK domain is found at methionine 1–glutamate 457. Mg(2+) contacts are provided by glutamate 268, glutamate 298, and aspartate 441. The Proton acceptor role is filled by aspartate 441.

Belongs to the carbohydrate kinase PfkC family. Requires Mg(2+) as cofactor.

Its subcellular location is the cytoplasm. The enzyme catalyses beta-D-fructose 6-phosphate + ADP = beta-D-fructose 1,6-bisphosphate + AMP + H(+). Its pathway is carbohydrate degradation; glycolysis. Its function is as follows. Catalyzes the phosphorylation of fructose 6-phosphate to fructose 1,6-bisphosphate using ADP as the phosphate donor. In Thermococcus zilligii, this protein is ADP-specific phosphofructokinase.